Consider the following 196-residue polypeptide: DNA polymerase epsilon subunit D (196 aa).

The segment at 125–196 (RKKEKLDSGE…ETRVQNLEQT (72 aa)) is disordered. Acidic residues predominate over residues 133 to 143 (GEVDADGDIDM). Basic and acidic residues predominate over residues 144–159 (GEDKENVPVEKVKEHD). Positions 160-173 (EIEEQGDALQDVEE) are enriched in acidic residues. Over residues 174–188 (SSEKKQKTESQDVET) the composition is skewed to basic and acidic residues. Ser-183 bears the Phosphoserine; by ATM or ATR mark.

As to quaternary structure, DNA polymerase epsilon is a heterotetramer consisting of POL2, DPB2, DPB3 and DPB4. Component of the ISW2 complex, which at least consists of ISW2, ITC1, DLS1 and DPB4.

The protein resides in the nucleus. As accessory component of the DNA polymerase epsilon (DNA polymerase II) participates in chromosomal DNA replication. It is required during synthesis of the leading and lagging DNA strands at the replication fork and binds at/or near replication origins and moves along DNA with the replication fork. It has 3'-5' proofreading exonuclease activity that correct errors arising during DNA replication. It is also involved in DNA synthesis during DNA repair. Also functions as a component of the ISW2 complex, which acts in remodeling the chromatin by catalyzing an ATP-dependent alteration in the structure of nucleosomal DNA. The ISW2 complex is involved in coordinating transcriptional repression and in inheritance of telomeric silencing. It is involved in repression of MAT a-specific genes, INO1, and early meiotic genes during mitotic growth dependent upon transcription factor UME6 and in a parallel pathway to the RPD3-SIN3 histone deacetylase complex. The sequence is that of DNA polymerase epsilon subunit D (DPB4) from Saccharomyces cerevisiae (strain ATCC 204508 / S288c) (Baker's yeast).